The chain runs to 316 residues: Adenine deaminase (316 aa).

3 residues coordinate Zn(2+): His-14, His-16, and His-194. Glu-197 acts as the Proton donor in catalysis. Asp-275 lines the Zn(2+) pocket. Asp-276 provides a ligand contact to substrate.

The protein belongs to the metallo-dependent hydrolases superfamily. Adenosine and AMP deaminases family. Adenine deaminase type 2 subfamily. Zn(2+) is required as a cofactor.

It carries out the reaction adenine + H2O + H(+) = hypoxanthine + NH4(+). In terms of biological role, catalyzes the hydrolytic deamination of adenine to hypoxanthine. Plays an important role in the purine salvage pathway and in nitrogen catabolism. This is Adenine deaminase from Pseudomonas aeruginosa (strain UCBPP-PA14).